The following is an 896-amino-acid chain: DNA double-strand break repair Rad50 ATPase (896 aa).

Residues 32-38 (NGAGKSS) and Q137 contribute to the ATP site. Coiled coils occupy residues 200 to 274 (RRYQ…KLQE), 412 to 505 (EEIR…LISM), 580 to 611 (IGDI…ESEF), 636 to 669 (IKLA…IQKR), and 702 to 731 (RSKV…RMKK). Residues 411–507 (YEEIRRDIDE…KKRQLISMES (97 aa)) enclose the Zinc-hook domain. The Zn(2+) site is built by C455 and C458.

Belongs to the SMC family. RAD50 subfamily. As to quaternary structure, homodimer. Forms a heterotetramer composed of two Mre11 subunits and two Rad50 subunits. Zn(2+) serves as cofactor.

Its function is as follows. Part of the Rad50/Mre11 complex, which is involved in the early steps of DNA double-strand break (DSB) repair. The complex may facilitate opening of the processed DNA ends to aid in the recruitment of HerA and NurA. Rad50 controls the balance between DNA end bridging and DNA resection via ATP-dependent structural rearrangements of the Rad50/Mre11 complex. The sequence is that of DNA double-strand break repair Rad50 ATPase from Thermoplasma acidophilum (strain ATCC 25905 / DSM 1728 / JCM 9062 / NBRC 15155 / AMRC-C165).